A 344-amino-acid polypeptide reads, in one-letter code: Tripartite motif-containing protein 44 (344 aa).

Disordered stretches follow at residues 1 to 25 and 68 to 165; these read MASGVGAAFEELPHDGTCDECEPDE and TPPA…EFDP. A compositionally biased stretch (basic and acidic residues) spans 75-92; that stretch reads GAGKEEAEVKVEQEREIE. Positions 93-165 are enriched in acidic residues; that stretch reads SEAGEESESE…ETEAESEFDP (73 aa). The B box-type zinc-finger motif lies at 174-215; the sequence is VAKRKCPDHGLDLSTYCQEDRQLICVLCPVIGAHQGHQLSTL. Zn(2+) contacts are provided by Cys-179, His-182, Cys-201, and His-207. The stretch at 290–325 forms a coiled coil; it reads AHVTEILADIQSHMDRLMTQMAQAKEQLDTSNESAE. Positions 309-344 are disordered; it reads QMAQAKEQLDTSNESAEPKAEGDEEGPSGASEEEDT. Residues 330 to 344 show a composition bias toward acidic residues; that stretch reads GDEEGPSGASEEEDT. Ser-336 and Ser-339 each carry phosphoserine.

In terms of assembly, interacts (via coiled coil) with TRIM17 (via coiled coil).

Its function is as follows. May play a role in the process of differentiation and maturation of neuronal cells. May regulate the activity of TRIM17. Is a negative regulator of PAX6 expression. This is Tripartite motif-containing protein 44 (TRIM44) from Pongo abelii (Sumatran orangutan).